The primary structure comprises 225 residues: Sirohydrochlorin ferrochelatase, chloroplastic (225 aa).

Residues 1 to 46 (MTTQSQFLVNLSYGGLASQSNLRANNRVSPSSCQITRTNRSWALPV) constitute a chloroplast transit peptide. Residues His89 and His155 each coordinate Fe cation. Residues Cys199, Cys210, Cys213, and Cys219 each coordinate [4Fe-4S] cluster.

This sequence belongs to the CbiX family. SirB subfamily. In terms of assembly, homodimer. [4Fe-4S] cluster is required as a cofactor.

The protein localises to the plastid. The protein resides in the chloroplast. It catalyses the reaction siroheme + 2 H(+) = sirohydrochlorin + Fe(2+). It functions in the pathway porphyrin-containing compound metabolism; siroheme biosynthesis; siroheme from sirohydrochlorin: step 1/1. In terms of biological role, chelates iron to the siroheme precursor. Catalyzes the last step of the siroheme biosynthesis. Unlike its counterparts in bacteria, contains an [Fe-S] cluster which is not involved directly in the enzymatic reaction, but may play regulatory role in iron, sulfur and tetrapyrrole metabolism. The [Fe-S] cluster is required for normal plant growth. This Arabidopsis thaliana (Mouse-ear cress) protein is Sirohydrochlorin ferrochelatase, chloroplastic.